The chain runs to 360 residues: Phospho-N-acetylmuramoyl-pentapeptide-transferase (360 aa).

10 consecutive transmembrane segments (helical) span residues 26-46 (AILG…KLIE), 74-94 (MGGL…GDLG), 97-117 (YVWV…IDDY), 134-154 (YILQ…TAAN), 168-188 (VMPQ…VGAS), 199-219 (GLAI…AYLS), 236-256 (SGEL…FLWF), 263-283 (VFMG…IAVL), 288-308 (ILLV…ILQV), and 338-358 (VIVR…ATLK).

The protein belongs to the glycosyltransferase 4 family. MraY subfamily. It depends on Mg(2+) as a cofactor.

It is found in the cell inner membrane. It catalyses the reaction UDP-N-acetyl-alpha-D-muramoyl-L-alanyl-gamma-D-glutamyl-meso-2,6-diaminopimeloyl-D-alanyl-D-alanine + di-trans,octa-cis-undecaprenyl phosphate = di-trans,octa-cis-undecaprenyl diphospho-N-acetyl-alpha-D-muramoyl-L-alanyl-D-glutamyl-meso-2,6-diaminopimeloyl-D-alanyl-D-alanine + UMP. Its pathway is cell wall biogenesis; peptidoglycan biosynthesis. Catalyzes the initial step of the lipid cycle reactions in the biosynthesis of the cell wall peptidoglycan: transfers peptidoglycan precursor phospho-MurNAc-pentapeptide from UDP-MurNAc-pentapeptide onto the lipid carrier undecaprenyl phosphate, yielding undecaprenyl-pyrophosphoryl-MurNAc-pentapeptide, known as lipid I. This chain is Phospho-N-acetylmuramoyl-pentapeptide-transferase, found in Shewanella baltica (strain OS185).